Consider the following 904-residue polypeptide: DNA mismatch repair protein MutS (904 aa).

655-662 (GPNMGGKS) provides a ligand contact to ATP.

The protein belongs to the DNA mismatch repair MutS family.

This protein is involved in the repair of mismatches in DNA. It is possible that it carries out the mismatch recognition step. This protein has a weak ATPase activity. This Agrobacterium fabrum (strain C58 / ATCC 33970) (Agrobacterium tumefaciens (strain C58)) protein is DNA mismatch repair protein MutS.